Here is a 95-residue protein sequence, read N- to C-terminus: Ubiquinol-cytochrome-c reductase complex assembly factor 3 (95 aa).

Residues 1 to 7 (MTTLRKL) lie on the Mitochondrial matrix side of the membrane. A helical membrane pass occupies residues 8–28 (LLVGALLGAGAGVGTALFALV). The segment at 23–80 (ALFALVTPGEERKQAMLKEMPEQYPQRRDEAARTKELLLATLQEAAATQENVAWRKNW) is mediates lipid-binding. Residues 29–95 (TPGEERKQAM…GGGGGGGRSA (67 aa)) are Mitochondrial intermembrane-facing.

This sequence belongs to the UQCC3 family. Associates with the ubiquinol-cytochrome c reductase complex (mitochondrial respiratory chain complex III(CIII) or cytochrome b-c1 complex). Interacts with UQCC1. Forms a complex, named COMC, composed of UQCC1, UQCC2; UQCC3 and UQCC4; mediates MT-CYB hemylation and association with the first nuclear-encoded complex III subunit UQCRQ. Probably cleaved by OMA1 under mitochondrial stress conditions.

It localises to the mitochondrion inner membrane. Functionally, required for the assembly of the ubiquinol-cytochrome c reductase complex (mitochondrial respiratory chain complex III or cytochrome b-c1 complex), mediating cytochrome b recruitment and probably stabilization within the complex. Thereby, plays an important role in ATP production by mitochondria. Cardiolipin-binding protein, it may also control the cardiolipin composition of mitochondria membranes and their morphology. The sequence is that of Ubiquinol-cytochrome-c reductase complex assembly factor 3 from Bos taurus (Bovine).